A 279-amino-acid chain; its full sequence is Undecaprenyl-diphosphatase (279 aa).

Transmembrane regions (helical) follow at residues 2 to 22, 44 to 64, 85 to 105, 113 to 133, 163 to 183, 188 to 208, 223 to 243, and 255 to 275; these read LIIE…TEWL, AFIE…VMLI, WQLW…AVPL, FYFM…FIWI, VLSI…AIIL, TVAA…YSGL, AQVL…LLAI, and FTIF…YSFF.

It belongs to the UppP family.

It is found in the cell membrane. The catalysed reaction is di-trans,octa-cis-undecaprenyl diphosphate + H2O = di-trans,octa-cis-undecaprenyl phosphate + phosphate + H(+). Its function is as follows. Catalyzes the dephosphorylation of undecaprenyl diphosphate (UPP). Confers resistance to bacitracin. This is Undecaprenyl-diphosphatase from Streptococcus pyogenes serotype M12 (strain MGAS2096).